We begin with the raw amino-acid sequence, 129 residues long: Phosphoribosyl-AMP cyclohydrolase (129 aa).

D76 lines the Mg(2+) pocket. C77 is a Zn(2+) binding site. D78 and D80 together coordinate Mg(2+). Zn(2+) contacts are provided by C97 and C104.

The protein belongs to the PRA-CH family. Homodimer. It depends on Mg(2+) as a cofactor. The cofactor is Zn(2+).

The protein localises to the cytoplasm. The catalysed reaction is 1-(5-phospho-beta-D-ribosyl)-5'-AMP + H2O = 1-(5-phospho-beta-D-ribosyl)-5-[(5-phospho-beta-D-ribosylamino)methylideneamino]imidazole-4-carboxamide. It participates in amino-acid biosynthesis; L-histidine biosynthesis; L-histidine from 5-phospho-alpha-D-ribose 1-diphosphate: step 3/9. Functionally, catalyzes the hydrolysis of the adenine ring of phosphoribosyl-AMP. The chain is Phosphoribosyl-AMP cyclohydrolase from Polaromonas naphthalenivorans (strain CJ2).